Reading from the N-terminus, the 201-residue chain is Recombination protein RecR (201 aa).

Residues 60 to 75 (CSCCGNVDTIDPCTVC) form a C4-type zinc finger. A Toprim domain is found at 83-178 (SMIIVVEDVS…KTTRLAHGVP (96 aa)).

The protein belongs to the RecR family.

May play a role in DNA repair. It seems to be involved in an RecBC-independent recombinational process of DNA repair. It may act with RecF and RecO. The polypeptide is Recombination protein RecR (Allorhizobium ampelinum (strain ATCC BAA-846 / DSM 112012 / S4) (Agrobacterium vitis (strain S4))).